The primary structure comprises 130 residues: Iron-sulfur cluster insertion protein ErpA (130 aa).

3 residues coordinate iron-sulfur cluster: C58, C122, and C124.

Belongs to the HesB/IscA family. Homodimer. Iron-sulfur cluster is required as a cofactor.

Its function is as follows. Required for insertion of 4Fe-4S clusters for at least IspG. The protein is Iron-sulfur cluster insertion protein ErpA of Stenotrophomonas maltophilia (strain K279a).